A 344-amino-acid chain; its full sequence is L-lactate dehydrogenase B (344 aa).

Residues 62-67 and arginine 109 contribute to the NAD(+) site; that span reads DALPDK. Substrate contacts are provided by arginine 116, asparagine 148, and arginine 179. NAD(+) is bound at residue asparagine 148. The Proton acceptor role is filled by histidine 203. Residue threonine 258 participates in substrate binding.

It belongs to the LDH/MDH superfamily. LDH family. In terms of assembly, tetramer that arise from random association of LDH-A and LDH-B.

It catalyses the reaction (S)-lactate + NAD(+) = pyruvate + NADH + H(+). The protein operates within fermentation; pyruvate fermentation to lactate; (S)-lactate from pyruvate: step 1/1. In Hordeum vulgare (Barley), this protein is L-lactate dehydrogenase B.